The chain runs to 123 residues: Large ribosomal subunit protein bL19 (123 aa).

Belongs to the bacterial ribosomal protein bL19 family.

Functionally, this protein is located at the 30S-50S ribosomal subunit interface and may play a role in the structure and function of the aminoacyl-tRNA binding site. This is Large ribosomal subunit protein bL19 (rplS) from Treponema pallidum (strain Nichols).